Consider the following 229-residue polypeptide: Potassium/proton antiporter CemA (229 aa).

3 consecutive transmembrane segments (helical) span residues 6–26 (AFIP…ISLC), 107–127 (ILHF…SFWG), and 189–209 (ILSG…KYWI).

Belongs to the CemA family.

Its subcellular location is the plastid. It localises to the chloroplast inner membrane. It catalyses the reaction K(+)(in) + H(+)(out) = K(+)(out) + H(+)(in). Functionally, contributes to K(+)/H(+) antiport activity by supporting proton efflux to control proton extrusion and homeostasis in chloroplasts in a light-dependent manner to modulate photosynthesis. Prevents excessive induction of non-photochemical quenching (NPQ) under continuous-light conditions. Indirectly promotes efficient inorganic carbon uptake into chloroplasts. This is Potassium/proton antiporter CemA from Olimarabidopsis pumila (Dwarf rocket).